The following is a 141-amino-acid chain: Metallothiol transferase FosB (141 aa).

The 116-residue stretch at 5–120 (SINHLLFSVS…DGHKFEFHTG (116 aa)) folds into the VOC domain. Mg(2+) contacts are provided by histidine 8, histidine 67, and glutamate 116. The Proton donor/acceptor role is filled by glutamate 116.

It belongs to the fosfomycin resistance protein family. FosB subfamily. In terms of assembly, homodimer. The cofactor is Mg(2+).

Its subcellular location is the cytoplasm. In terms of biological role, metallothiol transferase which confers resistance to fosfomycin by catalyzing the addition of a thiol cofactor to fosfomycin. L-cysteine is probably the physiological thiol donor. The polypeptide is Metallothiol transferase FosB (Lysinibacillus sphaericus (strain C3-41)).